A 240-amino-acid polypeptide reads, in one-letter code: Sorting nexin-3 (240 aa).

Residues 1 to 85 (MSAYPQDTYF…PPVQVTHSPF (85 aa)) are disordered. The segment covering 22–33 (YQPPPQPQPQQP) has biased composition (pro residues). Low complexity-rich tracts occupy residues 34 to 54 (PYQQ…QPYQ) and 62 to 84 (QQSP…THSP). A PX domain is found at 118–235 (SFLEIEIRNP…CAFLQDPAWD (118 aa)). A 1,2-diacyl-sn-glycero-3-phospho-(1D-myo-inositol-3-phosphate) is bound by residues Arg-161, Ser-163, Lys-187, Arg-192, and Arg-201.

Belongs to the sorting nexin family.

It is found in the cytoplasm. The protein localises to the golgi apparatus membrane. It localises to the prevacuolar compartment membrane. In terms of biological role, required for retention of late Golgi membrane proteins. Component of the retrieval machinery that functions by direct interaction with the cytosolic tails of certain TGN membrane proteins during the sorting/budding process at the prevacuolar compartment. Binds phosphatidylinositol 3-phosphate (PtdIns(P3)). The chain is Sorting nexin-3 (SNX3) from Cryptococcus neoformans var. neoformans serotype D (strain JEC21 / ATCC MYA-565) (Filobasidiella neoformans).